Consider the following 275-residue polypeptide: Phosphate import ATP-binding protein PstB 1 (275 aa).

Positions 22 to 261 (LETQAVSVYY…NRTEKIFNSP (240 aa)) constitute an ABC transporter domain. 54–61 (GPSGCGKS) is a binding site for ATP.

The protein belongs to the ABC transporter superfamily. Phosphate importer (TC 3.A.1.7) family. The complex is composed of two ATP-binding proteins (PstB), two transmembrane proteins (PstC and PstA) and a solute-binding protein (PstS).

It localises to the cell inner membrane. It carries out the reaction phosphate(out) + ATP + H2O = ADP + 2 phosphate(in) + H(+). In terms of biological role, part of the ABC transporter complex PstSACB involved in phosphate import. Responsible for energy coupling to the transport system. The sequence is that of Phosphate import ATP-binding protein PstB 1 from Synechococcus sp. (strain JA-2-3B'a(2-13)) (Cyanobacteria bacterium Yellowstone B-Prime).